Consider the following 257-residue polypeptide: MALAKRIIPCLDVTAGRVVKGVNFVELRDAGDPVEIARRYDEQGADELTFLDITATSDQRDLILPIIEAVASQVFIPLTVGGGVRAVEDVRRLLNAGADKVSMNSSAVANPQLVRDSTDKYGSQCIVVAIDAKRVSAEGETPRWEVFTHGGRKNTGLDAVEWARRMAELGAGEILLTSMDRDGTKSGFDIALTRAVSDAVSIPVIASGGVGSLQHLADGITQGRADAVLAASIFHYGEHTVGECKRFMADQGISVRL.

Catalysis depends on residues Asp12 and Asp131.

This sequence belongs to the HisA/HisF family. As to quaternary structure, heterodimer of HisH and HisF.

The protein resides in the cytoplasm. The catalysed reaction is 5-[(5-phospho-1-deoxy-D-ribulos-1-ylimino)methylamino]-1-(5-phospho-beta-D-ribosyl)imidazole-4-carboxamide + L-glutamine = D-erythro-1-(imidazol-4-yl)glycerol 3-phosphate + 5-amino-1-(5-phospho-beta-D-ribosyl)imidazole-4-carboxamide + L-glutamate + H(+). It participates in amino-acid biosynthesis; L-histidine biosynthesis; L-histidine from 5-phospho-alpha-D-ribose 1-diphosphate: step 5/9. Functionally, IGPS catalyzes the conversion of PRFAR and glutamine to IGP, AICAR and glutamate. The HisF subunit catalyzes the cyclization activity that produces IGP and AICAR from PRFAR using the ammonia provided by the HisH subunit. The protein is Imidazole glycerol phosphate synthase subunit HisF of Paraburkholderia phymatum (strain DSM 17167 / CIP 108236 / LMG 21445 / STM815) (Burkholderia phymatum).